Here is a 1025-residue protein sequence, read N- to C-terminus: MKFFALFIYRPVATILLSVAITLCGILGFRMLPVAPLPQVDFPVIMVSASLPGASPETMASSVATPLERSLGRIAGVSEMTSSSSLGSTRIILQFDFDRDINGAARDVQAAINAAQSLLPSGMPSRPTYRKANPSDAPIMILTLTSDTYSQGELYDFASTQLAPTISQIDGVGDVDVGGSSLPAVRVGLNPQALFNQGVSLDDVRTAISNANVRKPQGALEDGTHRWQIQTNDELKTAAEYQPLIIHYNNGGAVRLGDVATVTDSVQDVRNAGMTNAKPAILLMIRKLPEANIIQTVDSIRAKLPELQETIPAAIDLQIAQDRSPTIRASLEEVEQTLIISVALVILVVFLFLRSGRATIIPAVVVPVSLIGTFAAMYLCGFSLNNLSLMALTIATGFVVDDAIVVLENIARHLEAGMKPLQAALQGTREVGFTVLSMSLSLVAVFLPLLLMGGLPGRLLREFAVTLSVAIGISLLVSLTLTPMMCGWMLKASKPREQKRLRGFGRMLVALQQGYGKSLKWVLNHTRLVGVVLLGTIALNIWLYISIPKTFFPEQDTGVLMGGIQADQSISFQAMRGKLQDFMKIIRDDPAVDNVTGFTGGSRVNSGMMFITLKPRDERSETAQQIIDRLRVKLAKEPGANLFLMAVQDIRVGGRQSNASYQYTLLSDDLAALREWEPKIRKKLATLPELADVNSDQQDNGAEMNLVYDRDTMARLGIDVQAANSLLNNAFGQRQISTIYQPMNQYKVVMEVDPRYTQDISALEKMFVINNEGKAIPLSYFAKWQPANAPLSVNHQGLSAASTISFNLPTGKSLSDASAAIDRAMTQLGVPSTVRGSFAGTAQVFQETMNSQVILIIAAIATVYIVLGILYESYVHPLTILSTLPSAGVGALLALELFNAPFSLIALIGIMLLIGIVKKNAIMMVDFALEAQRHGNLTPQEAIFQACLLRFRPIMMTTLAALFGALPLVLSGGDGSELRQPLGITIVGGLVMSQLLTLYTTPVVYLFFDRLRLRFSRKPKQTVTE.

12 consecutive transmembrane segments (helical) span residues 3–23, 333–353, 360–380, 387–407, 431–451, 463–483, 528–548, 853–873, 875–895, 897–917, 953–973, and 984–1004; these read FFALFIYRPVATILLSVAITL, EVEQTLIISVALVILVVFLFL, IIPAVVVPVSLIGTFAAMYLC, LSLMALTIATGFVVDDAIVVL, VGFTVLSMSLSLVAVFLPLLL, FAVTLSVAIGISLLVSLTLTP, LVGVVLLGTIALNIWLYISIP, VILIIAAIATVYIVLGILYES, VHPLTILSTLPSAGVGALLAL, LFNAPFSLIALIGIMLLIGIV, PIMMTTLAALFGALPLVLSGG, and ITIVGGLVMSQLLTLYTTPVV.

This sequence belongs to the resistance-nodulation-cell division (RND) (TC 2.A.6) family. MdtC subfamily. In terms of assembly, part of a tripartite efflux system composed of MdtA, MdtB and MdtC. MdtC forms a heteromultimer with MdtB.

The protein localises to the cell inner membrane. The MdtABC tripartite complex confers resistance against novobiocin and deoxycholate. This Escherichia coli O8 (strain IAI1) protein is Multidrug resistance protein MdtC.